We begin with the raw amino-acid sequence, 113 residues long: Endoribonuclease SymE (113 aa).

A SpoVT-AbrB domain is found at 29–74 (SRYPDYSRIPAITLKGQWLEAAGFATGTAVDVKVMEGCIVLTAQPP).

Belongs to the SymE family.

It localises to the cytoplasm. Functionally, involved in the degradation and recycling of damaged RNA. It is itself a target for degradation by the ATP-dependent protease Lon. In Escherichia coli O6:K15:H31 (strain 536 / UPEC), this protein is Endoribonuclease SymE.